A 375-amino-acid polypeptide reads, in one-letter code: Growth/differentiation factor 8 (375 aa).

The first 18 residues, 1–18, serve as a signal peptide directing secretion; sequence MQRLQICVYIYLFVLIVA. Residues 19–266 constitute a propeptide that is removed on maturation; the sequence is GPVDLSENSE…VTDTPKRSRR (248 aa). An N-linked (GlcNAc...) asparagine glycan is attached at N71. Intrachain disulfides connect C272-C282, C281-C340, C309-C372, and C313-C374.

Belongs to the TGF-beta family. Homodimer; disulfide-linked. Interacts with WFIKKN2, leading to inhibit its activity. Interacts with FSTL3. Synthesized as large precursor molecule that undergoes proteolytic cleavage to generate an N-terminal propeptide and a disulfide linked C-terminal dimer, which is the biologically active molecule. The circulating form consists of a latent complex of the C-terminal dimer and other proteins, including its propeptide, which maintain the C-terminal dimer in a latent, inactive state. Ligand activation requires additional cleavage of the prodomain by a tolloid-like metalloproteinase.

The protein localises to the secreted. Its function is as follows. Acts specifically as a negative regulator of skeletal muscle growth. The polypeptide is Growth/differentiation factor 8 (MSTN) (Canis lupus familiaris (Dog)).